The chain runs to 945 residues: Isoleucine--tRNA ligase 1 (945 aa).

The 'HIGH' region signature appears at 66-76 (PYANGDIHLGH). E581 is a binding site for L-isoleucyl-5'-AMP. The short motif at 622 to 626 (KMSKS) is the 'KMSKS' region element. K625 provides a ligand contact to ATP. 4 residues coordinate Zn(2+): C908, C911, C928, and C931.

Belongs to the class-I aminoacyl-tRNA synthetase family. IleS type 1 subfamily. In terms of assembly, monomer. Zn(2+) serves as cofactor.

The protein resides in the cytoplasm. It carries out the reaction tRNA(Ile) + L-isoleucine + ATP = L-isoleucyl-tRNA(Ile) + AMP + diphosphate. Its function is as follows. Catalyzes the attachment of isoleucine to tRNA(Ile). As IleRS can inadvertently accommodate and process structurally similar amino acids such as valine, to avoid such errors it has two additional distinct tRNA(Ile)-dependent editing activities. One activity is designated as 'pretransfer' editing and involves the hydrolysis of activated Val-AMP. The other activity is designated 'posttransfer' editing and involves deacylation of mischarged Val-tRNA(Ile). This is Isoleucine--tRNA ligase 1 from Burkholderia mallei (strain ATCC 23344).